Consider the following 315-residue polypeptide: Putative S-adenosyl-L-methionine-dependent methyltransferase MAV_4557 (315 aa).

S-adenosyl-L-methionine is bound by residues aspartate 134 and 163–164; that span reads DL.

This sequence belongs to the UPF0677 family.

Functionally, exhibits S-adenosyl-L-methionine-dependent methyltransferase activity. The protein is Putative S-adenosyl-L-methionine-dependent methyltransferase MAV_4557 of Mycobacterium avium (strain 104).